We begin with the raw amino-acid sequence, 302 residues long: MHDLLNEILDEVRPLLGQGKVADYIPALGGVRPDQLGIAVYGNDGQVFSAGDAETLFSIQSISKVFSLVQAIGHSGEDIWQRLGHEPSGQPFNSLVQLEFEQGRPRNPFINAGALVICDINQARFAAPSLSMRDFVRRLCGNRSITSDSKVAESEYQHRSRNAAAAYLMKSFDNFHGDVEDVLRSYFHHCALSMNCIDLAKAFGFLANQGFCAHSGVQILTARQATQVNSIMATSGLYDEAGNFAYRVGLPGKSGVGGGIVAIVPERASVCVWSPALNAAGNSLVGMAALEKLSARVDWSVF.

Residues serine 61, asparagine 111, glutamate 155, asparagine 162, tyrosine 186, tyrosine 238, and valine 256 each contribute to the substrate site.

It belongs to the glutaminase family. Homotetramer.

It carries out the reaction L-glutamine + H2O = L-glutamate + NH4(+). This chain is Glutaminase, found in Pseudomonas syringae pv. tomato (strain ATCC BAA-871 / DC3000).